Consider the following 591-residue polypeptide: MALAISSEDTQVLLKDKNVLHESNVDKYRTAGQITQTALRFLAGLINDSYHHRTRATPLSVAELCMLTDSFVERCVRQAFANKANERGIAHPTTIDVDEITQGWAPETDDAANMERWNRDRQANSGSCQGARSAISGFLHEGDVVKLTVGCHIDGYTAQVSHTMVVYPTTRREADQALVPAGPLLGAKADAVAAATIAKESVTSLLACAQATEKLPAAFGERQVTGTLIRRVVDAVARSYNCAVVPGSRVRRVRRFLAGQNEGVVAERDIKGVHWTEAHQEAALLASSVETTDVTRVDASNKSANDSAVATDDFVVVSGEAYLIDLKIAPLKDLPRGLLTLQTVDHFSGKSHRKDELLARASLICRDFAKQHVLKLKSSRQLLHKLDSKGVYPTKLAHLTAAFPLDPESPDWDAVSKELKHLRLGLAEVTNNYLANEKPVQLCRLVPWDVILKAVNPTGKHGTDASNPTLPGYEIPLPQLGISSLRLKSLLKDSLPVPVARESITVLLCPAEVTSTGSPELLKLTGGPTTTPSWIHSDYELNVSDPVVQGILQLAELSKDKRFGLAIRETQPWKQKIPSAAAVTSADVEMA.

This sequence belongs to the peptidase M24 family. In terms of assembly, component of the nucleoplasmic and cytoplasmic pre-60S ribosomal particles.

Its subcellular location is the cytoplasm. It localises to the nucleus. In terms of biological role, probable metalloprotease involved in proper assembly of pre-ribosomal particles during the biogenesis of the 60S ribosomal subunit. Accompanies the pre-60S particles to the cytoplasm. This Eremothecium gossypii (strain ATCC 10895 / CBS 109.51 / FGSC 9923 / NRRL Y-1056) (Yeast) protein is Probable metalloprotease ARX1 (ARX1).